We begin with the raw amino-acid sequence, 128 residues long: Protein ripply2 (128 aa).

The segment at 1–63 (MENAGGAEGT…HAAEAMPDGP (63 aa)) is disordered. Residues 9–22 (GTESGAAACAATDG) show a composition bias toward low complexity. Residues 37-40 (WRPW) carry the WRPW motif motif. The ripply homology domain stretch occupies residues 77 to 112 (HPVRLFWPKSKCYDYLYQEAEALLKNFPIQATISFY).

It belongs to the ripply family.

The protein localises to the nucleus. Its function is as follows. Plays a role in somitogenesis. Required for somite segregation and establishment of rostrocaudal polarity in somites. In Homo sapiens (Human), this protein is Protein ripply2 (RIPPLY2).